The following is a 392-amino-acid chain: Glucan endo-1,3-beta-glucosidase 14 (392 aa).

The signal sequence occupies residues 1-21 (MATHSLSFFFRVLLLLFLTLS). 2 N-linked (GlcNAc...) asparagine glycosylation sites follow: N54 and N89. Residue E122 is the Proton donor of the active site. E267 acts as the Nucleophile in catalysis. A lipid anchor (GPI-anchor amidated serine) is attached at S359. The propeptide at 360–392 (RATTIKILNLWRVVMGLAVAWFILDMGDKMRMR) is removed in mature form.

The protein belongs to the glycosyl hydrolase 17 family.

It is found in the cell membrane. Its subcellular location is the secreted. It localises to the cell wall. The protein resides in the cytoplasm. The enzyme catalyses Hydrolysis of (1-&gt;3)-beta-D-glucosidic linkages in (1-&gt;3)-beta-D-glucans.. This chain is Glucan endo-1,3-beta-glucosidase 14, found in Arabidopsis thaliana (Mouse-ear cress).